Here is a 116-residue protein sequence, read N- to C-terminus: NADH-ubiquinone oxidoreductase chain 3 (116 aa).

A run of 3 helical transmembrane segments spans residues 3-23 (LITT…TISF), 56-76 (FFLI…LLPL), and 87-107 (LTLI…IYEW).

The protein belongs to the complex I subunit 3 family.

It is found in the mitochondrion membrane. It carries out the reaction a ubiquinone + NADH + 5 H(+)(in) = a ubiquinol + NAD(+) + 4 H(+)(out). In terms of biological role, core subunit of the mitochondrial membrane respiratory chain NADH dehydrogenase (Complex I) that is believed to belong to the minimal assembly required for catalysis. Complex I functions in the transfer of electrons from NADH to the respiratory chain. The immediate electron acceptor for the enzyme is believed to be ubiquinone. The polypeptide is NADH-ubiquinone oxidoreductase chain 3 (MT-ND3) (Oncorhynchus mykiss (Rainbow trout)).